The primary structure comprises 362 residues: Patr class I histocompatibility antigen, B-2 alpha chain (362 aa).

The N-terminal stretch at 1 to 24 (MQVTAPRTVLLLLSAALALTETWA) is a signal peptide. The tract at residues 25–114 (GSHSMKYFYT…LRGYYNQSEA (90 aa)) is alpha-1. At 25–308 (GSHSMKYFYT…EPSSQSTIPI (284 aa)) the chain is on the extracellular side. Asn-110 carries an N-linked (GlcNAc...) asparagine glycan. Positions 115–206 (GSHIIQRMYG…ENGKETLQRA (92 aa)) are alpha-2. 2 cysteine pairs are disulfide-bonded: Cys-125–Cys-188 and Cys-227–Cys-283. Residues 207 to 298 (DPPKTHVTHH…GLPKPLTLRW (92 aa)) form an alpha-3 region. In terms of domain architecture, Ig-like C1-type spans 209–295 (PKTHVTHHPI…QHEGLPKPLT (87 aa)). The connecting peptide stretch occupies residues 299–308 (EPSSQSTIPI). Residues 309–332 (VGIVAGLAVLAVVVIGAVVAAVMC) traverse the membrane as a helical segment. At 333-362 (RRKSSGGKGGSYSQAASSDSAQGSDVSLTA) the chain is on the cytoplasmic side. Residues 336 to 362 (SSGGKGGSYSQAASSDSAQGSDVSLTA) are disordered. The span at 343 to 362 (SYSQAASSDSAQGSDVSLTA) shows a compositional bias: low complexity.

Belongs to the MHC class I family. Heterodimer of an alpha chain and a beta chain (beta-2-microglobulin).

The protein localises to the membrane. In terms of biological role, involved in the presentation of foreign antigens to the immune system. The sequence is that of Patr class I histocompatibility antigen, B-2 alpha chain from Pan troglodytes (Chimpanzee).